The chain runs to 494 residues: Anthranilate synthase component 1 (494 aa).

L-tryptophan-binding positions include Ser-50 and 276–278 (PYM). 311-312 (GT) contacts chorismate. Residue Glu-338 participates in Mg(2+) binding. Chorismate contacts are provided by residues Tyr-426, Arg-446, 460-462 (GAG), and Gly-462. Residue Glu-475 participates in Mg(2+) binding.

This sequence belongs to the anthranilate synthase component I family. As to quaternary structure, heterotetramer consisting of two non-identical subunits: a beta subunit (TrpG) and a large alpha subunit (TrpE). It depends on Mg(2+) as a cofactor.

It catalyses the reaction chorismate + L-glutamine = anthranilate + pyruvate + L-glutamate + H(+). It participates in amino-acid biosynthesis; L-tryptophan biosynthesis; L-tryptophan from chorismate: step 1/5. Its activity is regulated as follows. Feedback inhibited by tryptophan. Its function is as follows. Part of a heterotetrameric complex that catalyzes the two-step biosynthesis of anthranilate, an intermediate in the biosynthesis of L-tryptophan. In the first step, the glutamine-binding beta subunit (TrpG) of anthranilate synthase (AS) provides the glutamine amidotransferase activity which generates ammonia as a substrate that, along with chorismate, is used in the second step, catalyzed by the large alpha subunit of AS (TrpE) to produce anthranilate. In the absence of TrpG, TrpE can synthesize anthranilate directly from chorismate and high concentrations of ammonia. The chain is Anthranilate synthase component 1 (trpE) from Acetivibrio thermocellus (Hungateiclostridium thermocellum).